Reading from the N-terminus, the 406-residue chain is Cysteine desulfurase (406 aa).

N6-(pyridoxal phosphate)lysine is present on Lys-226. Residue Cys-364 is the Cysteine persulfide intermediate of the active site.

The protein belongs to the class-V pyridoxal-phosphate-dependent aminotransferase family. Csd subfamily. As to quaternary structure, homodimer. Interacts with SufE and the SufBCD complex composed of SufB, SufC and SufD. The interaction with SufE is required to mediate the direct transfer of the sulfur atom from the S-sulfanylcysteine. Requires pyridoxal 5'-phosphate as cofactor.

It localises to the cytoplasm. It carries out the reaction (sulfur carrier)-H + L-cysteine = (sulfur carrier)-SH + L-alanine. The enzyme catalyses L-selenocysteine + AH2 = hydrogenselenide + L-alanine + A + H(+). The protein operates within cofactor biosynthesis; iron-sulfur cluster biosynthesis. Its function is as follows. Cysteine desulfurases mobilize the sulfur from L-cysteine to yield L-alanine, an essential step in sulfur metabolism for biosynthesis of a variety of sulfur-containing biomolecules. Component of the suf operon, which is activated and required under specific conditions such as oxidative stress and iron limitation. Acts as a potent selenocysteine lyase in vitro, that mobilizes selenium from L-selenocysteine. Selenocysteine lyase activity is however unsure in vivo. This Escherichia coli O17:K52:H18 (strain UMN026 / ExPEC) protein is Cysteine desulfurase.